A 430-amino-acid polypeptide reads, in one-letter code: Glutamine synthetase leaf isozyme, chloroplastic (430 aa).

Residues 1–49 (MAQILAPSTQWQMRITKTSPCATPITSKMWSSLVMKQTKKVAHSAKFRV) constitute a chloroplast transit peptide. Positions 77–157 (IIAEYIWIGG…VVCDAYTPAG (81 aa)) constitute a GS beta-grasp domain. The disordered stretch occupies residues 99–119 (SKPVSHPSEVPKWNYDGSSTG). The GS catalytic domain maps to 161-430 (PTNKRHRAAE…LAAQKIALKV (270 aa)).

It belongs to the glutamine synthetase family. In terms of assembly, homooctamer.

Its subcellular location is the plastid. The protein localises to the chloroplast. The enzyme catalyses L-glutamate + NH4(+) + ATP = L-glutamine + ADP + phosphate + H(+). Functionally, the light-modulated chloroplast enzyme, encoded by a nuclear gene and expressed primarily in leaves, is responsible for the reassimilation of the ammonia generated by photorespiration. In Pisum sativum (Garden pea), this protein is Glutamine synthetase leaf isozyme, chloroplastic (GS2).